The following is a 384-amino-acid chain: MAP kinase-activated protein kinase 3 (384 aa).

M1 is modified (N-acetylmethionine). The interval M1–R33 is disordered. The Protein kinase domain occupies Q46 to I306. ATP is bound by residues L52 to V60 and K75. The active-site Proton acceptor is the D168. Position 203 is a phosphothreonine; by MAPK14 (T203). The residue at position 253 (S253) is a Phosphoserine; by MAPK14. A Phosphoserine; by autocatalysis modification is found at S309. The tract at residues S309–R345 is autoinhibitory helix. T315 is subject to Phosphothreonine; by MAPK14. The Nuclear export signal (NES) motif lies at M337–V346. The segment at D347 to Q371 is p38 MAPK-binding site. 2 short sequence motifs (bipartite nuclear localization signal) span residues K352–D355 and K366–K370. Residues S359 to Q384 form a disordered region. Residues A372–Q384 are compositionally biased toward polar residues.

Belongs to the protein kinase superfamily. CAMK Ser/Thr protein kinase family. In terms of assembly, heterodimer with p38-alpha/MAPK14. The heterodimer with p38-alpha/MAPK14 forms a stable complex: molecules are positioned 'face to face' so that the ATP-binding sites of both kinases are at the heterodimer interface. Interacts with TCF3 and with polycomb proteins, such as PCH2 and BMI1/PCGF4. Post-translationally, phosphorylated and activated by MAPK1/ERK2 and MAPK3/ERK1. Phosphorylated and activated by MAP kinase p38-alpha/MAPK14 at Thr-201, Ser-251 and Thr-313. Isoform 3 is degraded following phosphorylation at Thr-203. In terms of tissue distribution, ubiquitously expressed (at protein level). Isoform 3 is expressed in skeletal muscles and heart.

Its subcellular location is the nucleus. It is found in the cytoplasm. The catalysed reaction is L-seryl-[protein] + ATP = O-phospho-L-seryl-[protein] + ADP + H(+). The enzyme catalyses L-threonyl-[protein] + ATP = O-phospho-L-threonyl-[protein] + ADP + H(+). Its activity is regulated as follows. Activated following phosphorylation by p38-alpha/MAPK14 following various stresses. Inhibited by ligand 5B (2'-[2-(1,3-benzodioxol-5-yl)pyrimidin-4-yl]-5',6'-dihydrospiro[piperidine-4,7'-pyrrolo[3,2-c]pyridin]- 4'(1'h)-one) and ligand P4O (2-[2-(2-fluorophenyl)pyridin-4-yl]-1,5,6,7-tetrahydro- 4h-pyrrolo[3,2-c]pyridin-4-one), 2 ATP-competitive inhibitors. In terms of biological role, stress-activated serine/threonine-protein kinase involved in cytokines production, endocytosis, cell migration, chromatin remodeling and transcriptional regulation. Following stress, it is phosphorylated and activated by MAP kinase p38-alpha/MAPK14, leading to phosphorylation of substrates. Phosphorylates serine in the peptide sequence, Hyd-X-R-X(2)-S, where Hyd is a large hydrophobic residue. MAPKAPK2 and MAPKAPK3, share the same function and substrate specificity, but MAPKAPK3 kinase activity and level in protein expression are lower compared to MAPKAPK2. Phosphorylates HSP27/HSPB1, KRT18, KRT20, RCSD1, RPS6KA3, TAB3 and TTP/ZFP36. Mediates phosphorylation of HSP27/HSPB1 in response to stress, leading to dissociate HSP27/HSPB1 from large small heat-shock protein (sHsps) oligomers and impair their chaperone activities and ability to protect against oxidative stress effectively. Involved in inflammatory response by regulating tumor necrosis factor (TNF) and IL6 production post-transcriptionally: acts by phosphorylating AU-rich elements (AREs)-binding proteins, such as TTP/ZFP36, leading to regulate the stability and translation of TNF and IL6 mRNAs. Phosphorylation of TTP/ZFP36, a major post-transcriptional regulator of TNF, promotes its binding to 14-3-3 proteins and reduces its ARE mRNA affinity leading to inhibition of dependent degradation of ARE-containing transcript. Involved in toll-like receptor signaling pathway (TLR) in dendritic cells: required for acute TLR-induced macropinocytosis by phosphorylating and activating RPS6KA3. Also acts as a modulator of Polycomb-mediated repression. The protein is MAP kinase-activated protein kinase 3 (Mapkapk3) of Mus musculus (Mouse).